Reading from the N-terminus, the 192-residue chain is Small ribosomal subunit protein uS5 (192 aa).

Residues 20 to 83 (FVDKLVHINR…EAAKRGLIRV (64 aa)) form the S5 DRBM domain. Residues 162–192 (SVAARRGLKVSALQARRRDADPADTSDAAVA) form a disordered region.

This sequence belongs to the universal ribosomal protein uS5 family. Part of the 30S ribosomal subunit. Contacts proteins S4 and S8.

Functionally, with S4 and S12 plays an important role in translational accuracy. Located at the back of the 30S subunit body where it stabilizes the conformation of the head with respect to the body. The polypeptide is Small ribosomal subunit protein uS5 (Methylorubrum populi (strain ATCC BAA-705 / NCIMB 13946 / BJ001) (Methylobacterium populi)).